The sequence spans 359 residues: MSADGIKLLRTPGFDKSKWMQLPRDVVIGHNALDQFPAVCQDLKIGRSVMLFAGKSTMQVAGNRIEELLAPSFDISTFLARELTPESMKEGEEAACGVDLIIGVGGGRVIDTAKIVSFNLDLPFISVPTAASHDGIASGRASLQTSEGSASLTAHPPLGVVADTGIIAAAPHRLLAAGCADIISNYTAILDWELSNRLRGEPISEYAITLSRMTAEILMKNAPMIRPHQEESAWMVVKALVSSGVAMAIAGSSRPASGGEHKFSHALERLAPGKALHGEACGIGTIIMMYLHGGDWRGIRTALQQIGAPTTPAELGIPDEVAVAALMMAKTIRPERFSILDSGLTEESATALIRLLYGE.

Residues 107–111 (GRVID) and 129–132 (TAAS) each bind NAD(+). Residue aspartate 134 coordinates substrate. Position 138 (serine 138) interacts with NAD(+). Residue aspartate 181 coordinates substrate. Positions 181 and 261 each coordinate Zn(2+). Histidine 265 contributes to the substrate binding site. Histidine 277 contributes to the Zn(2+) binding site.

The protein belongs to the glycerol-1-phosphate dehydrogenase family. Zn(2+) serves as cofactor.

It localises to the cytoplasm. The catalysed reaction is sn-glycerol 1-phosphate + NAD(+) = dihydroxyacetone phosphate + NADH + H(+). It carries out the reaction sn-glycerol 1-phosphate + NADP(+) = dihydroxyacetone phosphate + NADPH + H(+). It participates in membrane lipid metabolism; glycerophospholipid metabolism. Functionally, catalyzes the NAD(P)H-dependent reduction of dihydroxyacetonephosphate (DHAP or glycerone phosphate) to glycerol 1-phosphate (G1P). The G1P thus generated is used as the glycerophosphate backbone of phospholipids in the cellular membranes of Archaea. This is Glycerol-1-phosphate dehydrogenase [NAD(P)+] from Methanosphaerula palustris (strain ATCC BAA-1556 / DSM 19958 / E1-9c).